The following is a 270-amino-acid chain: Glutamate racemase (270 aa).

Substrate is bound by residues 15-16 (DS) and 47-48 (YG). The Proton donor/acceptor role is filled by C78. 79–80 (NT) is a substrate binding site. The Proton donor/acceptor role is filled by C189. Residue 190–191 (TH) participates in substrate binding.

It belongs to the aspartate/glutamate racemases family.

It catalyses the reaction L-glutamate = D-glutamate. It functions in the pathway cell wall biogenesis; peptidoglycan biosynthesis. In terms of biological role, provides the (R)-glutamate required for cell wall biosynthesis. The sequence is that of Glutamate racemase from Syntrophus aciditrophicus (strain SB).